The primary structure comprises 1907 residues: Chromatin modification-related protein EAF1 B (1907 aa).

4 disordered regions span residues Ala-108–Val-208, Asn-261–Thr-287, Gly-323–Asn-373, and Asn-449–Lys-469. Basic and acidic residues predominate over residues Ser-140–Leu-151. Composition is skewed to polar residues over residues Asn-261–Thr-270, Gly-333–Asn-342, and Thr-355–Ala-372. The HSA domain maps to Cys-563–Ser-641. Disordered stretches follow at residues Ser-836 to Lys-909 and Ala-928 to Leu-952. The span at Arg-856–Val-866 shows a compositional bias: basic residues. 2 stretches are compositionally biased toward polar residues: residues Thr-884–Tyr-898 and Gln-942–Leu-952. In terms of domain architecture, SANT spans Ser-1049–Lys-1105. Disordered stretches follow at residues Ala-1107–Pro-1131, Pro-1235–Ser-1266, Leu-1296–His-1319, Gly-1429–Ala-1465, Tyr-1477–Asn-1594, Val-1638–Thr-1703, Val-1767–Asn-1791, and Val-1824–Glu-1907. 5 stretches are compositionally biased toward polar residues: residues Asp-1116–Ser-1125, Ala-1242–Ser-1266, Leu-1296–Ala-1310, Leu-1431–Leu-1444, and Gln-1453–Gln-1462. Residues Pro-1493 to Gln-1512 show a composition bias toward low complexity. Residues Thr-1513–Pro-1529 are compositionally biased toward pro residues. 8 stretches are compositionally biased toward polar residues: residues Asn-1532–Gln-1545, Ser-1554–Lys-1568, Arg-1585–Asn-1594, Pro-1640–Gln-1655, Pro-1662–Pro-1672, Pro-1681–Thr-1703, Gln-1769–Thr-1782, and Val-1824–Leu-1844. Basic and acidic residues-rich tracts occupy residues Ser-1863–Glu-1872 and Leu-1882–Glu-1892.

This sequence belongs to the EAF1 family. Component of the NuA4 histone acetyltransferase complex. Interacts with ARP4 and SWC4, and (via HSA domain) with TAF14 and TAF14B. As to expression, expressed in leaves.

The protein resides in the nucleus. Functionally, component of the NuA4 histone acetyltransferase complex which is involved in transcriptional activation of selected genes principally by acetylation of nucleosomal histone H4 and H2A. The chain is Chromatin modification-related protein EAF1 B (EAF1B) from Arabidopsis thaliana (Mouse-ear cress).